We begin with the raw amino-acid sequence, 374 residues long: Alanine racemase (374 aa).

Catalysis depends on K34, which acts as the Proton acceptor; specific for D-alanine. K34 is subject to N6-(pyridoxal phosphate)lysine. R138 provides a ligand contact to substrate. Y265 acts as the Proton acceptor; specific for L-alanine in catalysis. M313 contributes to the substrate binding site.

The protein belongs to the alanine racemase family. Pyridoxal 5'-phosphate is required as a cofactor.

It carries out the reaction L-alanine = D-alanine. It functions in the pathway amino-acid biosynthesis; D-alanine biosynthesis; D-alanine from L-alanine: step 1/1. Catalyzes the interconversion of L-alanine and D-alanine. May also act on other amino acids. This is Alanine racemase (alr) from Hahella chejuensis (strain KCTC 2396).